Reading from the N-terminus, the 82-residue chain is P2Y purinoceptor 2 (82 aa).

Residues 1 to 25 (LPLSYGVVCVLGLCLNVVALYIFLC) form a helical membrane-spanning segment. Residues 26–35 (RLKTWNASTT) are Cytoplasmic-facing. A helical transmembrane segment spans residues 36 to 56 (YMFHLAVSDSLYAASLPLLVY). Residues 57–75 (YYAQGDHWPFSTVLCKLVR) lie on the Extracellular side of the membrane. A helical transmembrane segment spans residues 76 to 82 (FLFYTNL).

Belongs to the G-protein coupled receptor 1 family. As to expression, expressed in brain, heart, stria vascularis and vestibular labyrinth.

Its subcellular location is the cell membrane. Its function is as follows. Receptor for ATP and UTP coupled to G-proteins that activate a phosphatidylinositol-calcium second messenger system. Not activated by UDP. The protein is P2Y purinoceptor 2 (P2RY2) of Meriones unguiculatus (Mongolian jird).